The following is a 291-amino-acid chain: Bifunctional protein FolD 1 (291 aa).

Residues 167–169 (GAS), Ile-192, and Ile-233 contribute to the NADP(+) site.

This sequence belongs to the tetrahydrofolate dehydrogenase/cyclohydrolase family. Homodimer.

It carries out the reaction (6R)-5,10-methylene-5,6,7,8-tetrahydrofolate + NADP(+) = (6R)-5,10-methenyltetrahydrofolate + NADPH. It catalyses the reaction (6R)-5,10-methenyltetrahydrofolate + H2O = (6R)-10-formyltetrahydrofolate + H(+). Its pathway is one-carbon metabolism; tetrahydrofolate interconversion. Its function is as follows. Catalyzes the oxidation of 5,10-methylenetetrahydrofolate to 5,10-methenyltetrahydrofolate and then the hydrolysis of 5,10-methenyltetrahydrofolate to 10-formyltetrahydrofolate. The sequence is that of Bifunctional protein FolD 1 from Pseudomonas putida (strain ATCC 47054 / DSM 6125 / CFBP 8728 / NCIMB 11950 / KT2440).